Consider the following 240-residue polypeptide: 3-deoxy-D-manno-octulosonic acid kinase (240 aa).

Residue aspartate 170 is part of the active site.

Belongs to the protein kinase superfamily. KdkA/RfaP family.

It localises to the cell inner membrane. The enzyme catalyses an alpha-Kdo-(2-&gt;6)-lipid IVA + ATP = a 4-O-phospho-alpha-Kdo-(2-&gt;6)-lipid IVA + ADP + H(+). Its pathway is bacterial outer membrane biogenesis; LPS core biosynthesis. Functionally, catalyzes the ATP-dependent phosphorylation of the 3-deoxy-D-manno-octulosonic acid (Kdo) residue in Kdo-lipid IV(A) at the 4-OH position. The sequence is that of 3-deoxy-D-manno-octulosonic acid kinase from Mannheimia succiniciproducens (strain KCTC 0769BP / MBEL55E).